The chain runs to 492 residues: Heat shock factor protein 4 (492 aa).

A DNA-binding region spans residues 17-121 (VPAFLGKLWA…QLLERVRRKV (105 aa)). A hydrophobic repeat HR-A/B region spans residues 129–203 (GRWRPEDLGR…GPLQAGPSNA (75 aa)). Residues 245 to 322 (LPETNLGLSP…ECDFCVTAPP (78 aa)) form an interactions with DUSP26, MAPK1 and MAPK2 region. A disordered region spans residues 246–285 (PETNLGLSPHRARGPIISDIPEDSPSPEGTRLSPSSDGRR). Lys293 is covalently cross-linked (Glycyl lysine isopeptide (Lys-Gly) (interchain with G-Cter in SUMO)). Ser298 is modified (phosphoserine). The segment at 337–400 (GSFSPEGPRN…PAGPLDVLGP (64 aa)) is disordered. The hydrophobic repeat HR-C stretch occupies residues 364 to 389 (LGLESGDRSPESLLPPMLLQPPQESV). Low complexity predominate over residues 374–388 (ESLLPPMLLQPPQES).

Belongs to the HSF family. In terms of assembly, homotrimer. Exhibits constitutive DNA binding and forms trimers even in the absence of stress. Interacts with ALKBH4, DUSP26, MAPK1, MAPK2, MAPK8 and MAP kinase p38. Post-translationally, phosphorylated mainly on serine residues. Phosphorylation on Ser-298 promotes sumoylation on Lys-293. In terms of processing, isoform HSF4B is constitutively sumoylated. Sumoylation represses the transcriptional activity and is promoted by phosphorylation on Ser-298. HSFA is not sumoylated. As to expression, expressed in heart, skeletal muscle, eye and brain, and at much lower levels in some other tissues.

It localises to the nucleus. In terms of biological role, heat-shock transcription factor that specifically binds heat shock promoter elements (HSE). Required for denucleation and organelle rupture and degradation that occur during eye lens terminal differentiation, when fiber cells that compose the lens degrade all membrane-bound organelles in order to provide lens with transparency to allow the passage of light. In this process, may regulate denucleation of lens fiber cells in part by activating DNASE2B transcription. May be involved in DNA repair through the transcriptional regulation of RAD51. May up-regulate p53/TP53 protein in eye lens fiber cells, possibly through protein stabilization. In the eye lens, controls the expression of alpha-crystallin B chain/CRYAB and consequently may be involved in the regulation of lysosomal acidification. Functionally, transcriptional repressor. Transcriptional activator. This chain is Heat shock factor protein 4 (HSF4), found in Homo sapiens (Human).